A 194-amino-acid chain; its full sequence is Recombination protein RecR (194 aa).

The C4-type zinc finger occupies 55 to 70 (CRECGNLAEGELCPIC). Positions 78–171 (SLLAVVESVA…RVTRPAYGLP (94 aa)) constitute a Toprim domain.

This sequence belongs to the RecR family.

Functionally, may play a role in DNA repair. It seems to be involved in an RecBC-independent recombinational process of DNA repair. It may act with RecF and RecO. The sequence is that of Recombination protein RecR from Thermus thermophilus (strain ATCC 27634 / DSM 579 / HB8).